Here is a 728-residue protein sequence, read N- to C-terminus: Polyribonucleotide nucleotidyltransferase (728 aa).

Positions 489 and 495 each coordinate Mg(2+). The 60-residue stretch at 556–615 (PKIDTIKIDVDKIKIVIGKGGETIDKIIAETGVKIDIDEEGNVSIYSSDQDAINRAKEII) folds into the KH domain. The S1 motif domain maps to 625 to 693 (DEVYHAKVVR…AKGRVDASMK (69 aa)). The segment at 691-728 (SMKALLPRPPKPEKSDKHHDKGHPHKKHEEAPLTQTEE) is disordered. Residues 700-709 (PKPEKSDKHH) show a composition bias toward basic and acidic residues.

The protein belongs to the polyribonucleotide nucleotidyltransferase family. Requires Mg(2+) as cofactor.

The protein resides in the cytoplasm. It carries out the reaction RNA(n+1) + phosphate = RNA(n) + a ribonucleoside 5'-diphosphate. Involved in mRNA degradation. Catalyzes the phosphorolysis of single-stranded polyribonucleotides processively in the 3'- to 5'-direction. This chain is Polyribonucleotide nucleotidyltransferase, found in Streptococcus gordonii (strain Challis / ATCC 35105 / BCRC 15272 / CH1 / DL1 / V288).